The primary structure comprises 197 residues: Inosine triphosphate pyrophosphatase (197 aa).

10–15 (TGNANK) provides a ligand contact to ITP. Residue Glu-45 participates in Mg(2+) binding. ITP contacts are provided by residues Lys-58, 76–77 (DT), Lys-93, 151–154 (FGWD), Lys-175, and 180–181 (HR).

This sequence belongs to the HAM1 NTPase family. As to quaternary structure, homodimer. Requires Mg(2+) as cofactor. Mn(2+) serves as cofactor.

Its subcellular location is the cytoplasm. It localises to the nucleus. It catalyses the reaction ITP + H2O = IMP + diphosphate + H(+). The catalysed reaction is dITP + H2O = dIMP + diphosphate + H(+). It carries out the reaction XTP + H2O = XMP + diphosphate + H(+). The enzyme catalyses N(6)-hydroxy-dATP + H2O = N(6)-hydroxy-dAMP + diphosphate + H(+). Functionally, pyrophosphatase that hydrolyzes the non-canonical purine nucleotides inosine triphosphate (ITP), deoxyinosine triphosphate (dITP) as well as 2'-deoxy-N-6-hydroxylaminopurine triphosphate (dHAPTP) and 5-bromodeoxyuridine 5'-triphosphate (BrdUTP) to their respective monophosphate derivatives. Xanthosine 5'-triphosphate (XTP) is also a potential substrate. The enzyme does not distinguish between the deoxy- and ribose forms. Probably excludes non-canonical purines from RNA and DNA precursor pools, thus preventing their incorporation into RNA and DNA and avoiding chromosomal lesions. The protein is Inosine triphosphate pyrophosphatase of Saccharomyces cerevisiae (strain ATCC 204508 / S288c) (Baker's yeast).